Reading from the N-terminus, the 372-residue chain is Glutamate 5-kinase (372 aa).

Lys-14 contacts ATP. Residues Ser-54, Asp-141, and Asn-153 each contribute to the substrate site. ATP is bound by residues 173–174 and 215–221; these read TD and TGGMATK. The PUA domain maps to 280–358; that stretch reads RGQVVLDTGA…DNIEEILGYD (79 aa).

Belongs to the glutamate 5-kinase family.

It is found in the cytoplasm. The catalysed reaction is L-glutamate + ATP = L-glutamyl 5-phosphate + ADP. Its pathway is amino-acid biosynthesis; L-proline biosynthesis; L-glutamate 5-semialdehyde from L-glutamate: step 1/2. In terms of biological role, catalyzes the transfer of a phosphate group to glutamate to form L-glutamate 5-phosphate. The sequence is that of Glutamate 5-kinase from Shewanella halifaxensis (strain HAW-EB4).